We begin with the raw amino-acid sequence, 92 residues long: Small integral membrane protein 12 (92 aa).

A helical transmembrane segment spans residues 12–34; the sequence is YAPYVTFPVAFVVGAVGYHLEWF.

This sequence belongs to the SMIM12 family.

It localises to the membrane. This chain is Small integral membrane protein 12 (SMIM12), found in Bos taurus (Bovine).